A 292-amino-acid chain; its full sequence is DCN1-like protein 4 (292 aa).

The segment at 43 to 83 (HQTGSLRSCSSSDCFNKVMPPRKKRRPASGDDLSAKKSRHD) is disordered. Polar residues predominate over residues 45–56 (TGSLRSCSSSDC). Lys-95 participates in a covalent cross-link: Glycyl lysine isopeptide (Lys-Gly) (interchain with G-Cter in SUMO2). The DCUN1 domain occupies 101–287 (FSSKRCLEWF…LLDEFVEWYK (187 aa)).

As to quaternary structure, interacts (via the DCUN1 domain) with the unneddylated cullins: interacts with CUL1, CUL2, CUL3, CUL4A, CUL4B and CUL5; these interactions promote the cullin neddylation and the identity of the cullin dictates the affinity of the interaction. Interacts with RBX1 and RNF7. Interacts with CAND1; this interaction is bridged by cullins such as CUL3 and strongly inhibits the neddylation of CUL3. These CAND-cullin-DCNL complexes can only be neddylated in the presence of a substrate adapter. Interacts (via DCUN1 domain) with UBE2M (N-terminally acetylated form) and probably with UBE2F (N-terminally acetylated form).

The protein localises to the nucleus. Contributes to the neddylation of all cullins by transferring NEDD8 from N-terminally acetylated NEDD8-conjugating E2s enzyme to different cullin C-terminal domain-RBX complexes which are necessary for the activation of cullin-RING E3 ubiquitin ligases (CRLs). The sequence is that of DCN1-like protein 4 from Homo sapiens (Human).